A 225-amino-acid chain; its full sequence is GrpE protein homolog 2, mitochondrial (225 aa).

The N-terminal 32 residues, 1–32 (MAVRSLWACRLRVQRLLAWSAAWESKGWPLPF), are a transit peptide targeting the mitochondrion. N6-acetyllysine is present on lysine 142.

This sequence belongs to the GrpE family. In terms of assembly, probable component of the PAM complex at least composed of a mitochondrial HSP70 protein, GRPEL1 or GRPEL2, TIMM44, TIMM16/PAM16 and TIMM14/DNAJC19.

The protein localises to the mitochondrion matrix. In terms of biological role, essential component of the PAM complex, a complex required for the translocation of transit peptide-containing proteins from the inner membrane into the mitochondrial matrix in an ATP-dependent manner. Seems to control the nucleotide-dependent binding of mitochondrial HSP70 to substrate proteins. Stimulates ATPase activity of mt-HSP70. May also serve to modulate the interconversion of oligomeric (inactive) and monomeric (active) forms of mt-HSP70. The polypeptide is GrpE protein homolog 2, mitochondrial (GRPEL2) (Pongo abelii (Sumatran orangutan)).